We begin with the raw amino-acid sequence, 147 residues long: PTPN13-like protein, Y-linked (147 aa).

As to expression, expressed in testis. Detected in spermatocytes, spermatids and spermatozoa (at protein level).

The sequence is that of PTPN13-like protein, Y-linked (PRY) from Homo sapiens (Human).